The following is a 430-amino-acid chain: Enolase (430 aa).

(2R)-2-phosphoglycerate is bound at residue Gln165. Glu207 serves as the catalytic Proton donor. Mg(2+) contacts are provided by Asp244, Glu287, and Asp314. Residues Lys339, Arg368, Ser369, and Lys390 each coordinate (2R)-2-phosphoglycerate. The active-site Proton acceptor is the Lys339.

This sequence belongs to the enolase family. Component of the RNA degradosome, a multiprotein complex involved in RNA processing and mRNA degradation. Requires Mg(2+) as cofactor.

The protein localises to the cytoplasm. It localises to the secreted. Its subcellular location is the cell surface. It catalyses the reaction (2R)-2-phosphoglycerate = phosphoenolpyruvate + H2O. It participates in carbohydrate degradation; glycolysis; pyruvate from D-glyceraldehyde 3-phosphate: step 4/5. Functionally, catalyzes the reversible conversion of 2-phosphoglycerate (2-PG) into phosphoenolpyruvate (PEP). It is essential for the degradation of carbohydrates via glycolysis. The protein is Enolase of Xanthomonas campestris pv. campestris (strain 8004).